Here is a 384-residue protein sequence, read N- to C-terminus: Protein cutoff (384 aa).

It belongs to the DXO/Dom3Z family. Component of the Rhino-Deadlock-Cutoff (RDC) complex, composed of rhi/rhino, del/deadlock and cuff/cutoff. Interacts with rhi/rhino; this interaction is indirect and is mediated by del/deadlock. Interacts with del/deadlock (via C-terminal); this interaction is direct. Interacts with Rat1.

The protein resides in the cytoplasm. The protein localises to the nucleus. It is found in the chromosome. Its function is as follows. Involved in the piRNA pathway in germline tissues. Part of the Rhino-Deadlock-Cutoff (RDC) complex that stimulates piRNA biogenesis from chromatin regions corresponding to dual-strand, but not single-stranded, piRNA clusters. Promotes transcription of long piRNA precursors by preventing termination at canonical poly(A) sites. As part of the RDC complex, is recruited to chromatin enriched in histone modification H3K9me3 and might contribute to complex interaction by binding nascent transcript nucleic acid chains. Associates with chromatin upon exposure to homologous piRNA. Suppresses cleavage at canonical poly(A) sites by blocking recruitment of the cleavage and polyadenylation specificity factor (CPSF) complex and prevents transcriptional termination by RNA polymerase II, facilitating transcriptional read-through. As part of the RDC complex, involved in suppression of splicing. Catalytically inactive, lacking 5'-3' exonuclease and pyrophosphohydrolase activities. Stabilizes uncapped piRNA precursors in the nucleus, probably by sequestering or blocking the exonuclease activity of Rat1. May also be involved in siRNA biogenesis from dual-strand piRNA clusters. The polypeptide is Protein cutoff (cuff) (Drosophila melanogaster (Fruit fly)).